The chain runs to 444 residues: UDP-N-acetylglucosamine 1-carboxyvinyltransferase (444 aa).

22-23 is a phosphoenolpyruvate binding site; that stretch reads KN. R94 serves as a coordination point for UDP-N-acetyl-alpha-D-glucosamine. The Proton donor role is filled by D119. UDP-N-acetyl-alpha-D-glucosamine contacts are provided by D309 and V331.

This sequence belongs to the EPSP synthase family. MurA subfamily.

It localises to the cytoplasm. The catalysed reaction is phosphoenolpyruvate + UDP-N-acetyl-alpha-D-glucosamine = UDP-N-acetyl-3-O-(1-carboxyvinyl)-alpha-D-glucosamine + phosphate. It participates in cell wall biogenesis; peptidoglycan biosynthesis. Its function is as follows. Cell wall formation. Adds enolpyruvyl to UDP-N-acetylglucosamine. This Chlamydia trachomatis serovar D (strain ATCC VR-885 / DSM 19411 / UW-3/Cx) protein is UDP-N-acetylglucosamine 1-carboxyvinyltransferase.